A 144-amino-acid polypeptide reads, in one-letter code: Small ribosomal subunit protein eS19A (144 aa).

Residues 83–102 are disordered; the sequence is VNRGMRPSHHRDGSGSVQRK.

The protein belongs to the eukaryotic ribosomal protein eS19 family. In terms of assembly, component of the small ribosomal subunit (SSU). Mature yeast ribosomes consist of a small (40S) and a large (60S) subunit. The 40S small subunit contains 1 molecule of ribosomal RNA (18S rRNA) and at least 33 different proteins. The large 60S subunit contains 3 rRNA molecules (25S, 5.8S and 5S rRNA) and at least 46 different proteins.

The protein localises to the cytoplasm. Its subcellular location is the nucleus. The protein resides in the nucleolus. Its function is as follows. Component of the ribosome, a large ribonucleoprotein complex responsible for the synthesis of proteins in the cell. The small ribosomal subunit (SSU) binds messenger RNAs (mRNAs) and translates the encoded message by selecting cognate aminoacyl-transfer RNA (tRNA) molecules. The large subunit (LSU) contains the ribosomal catalytic site termed the peptidyl transferase center (PTC), which catalyzes the formation of peptide bonds, thereby polymerizing the amino acids delivered by tRNAs into a polypeptide chain. The nascent polypeptides leave the ribosome through a tunnel in the LSU and interact with protein factors that function in enzymatic processing, targeting, and the membrane insertion of nascent chains at the exit of the ribosomal tunnel. eS19 is required for proper maturation of the small (40S) ribosomal subunit. Binds to 40S pre-ribosomal particles, probably required after association of NOC4 but before association of ENP1, TSR1 and RIO2 with 20/21S pre-rRNA. The sequence is that of Small ribosomal subunit protein eS19A (rps1901) from Schizosaccharomyces pombe (strain 972 / ATCC 24843) (Fission yeast).